A 271-amino-acid chain; its full sequence is Aminoglycoside 3'-phosphotransferase (271 aa).

Asp-198 (proton acceptor) is an active-site residue.

It belongs to the aminoglycoside phosphotransferase family.

The catalysed reaction is kanamycin A + ATP = kanamycin 3'-phosphate + ADP + H(+). Functionally, resistance to kanamycin and structurally-related aminoglycosides, including amikacin. This Escherichia coli protein is Aminoglycoside 3'-phosphotransferase (aphA1).